Here is a 486-residue protein sequence, read N- to C-terminus: MTTFYTVVSWLVILGYWLLIAGVTLRILMKRRAVPSAMAWLLIIYILPLVGIIAYLSFGELHLGKRRAERARAMWPSTAKWLNDLKSCKHIFAEENSSVASSLFKLCERRQGIAGVKGNQLQLLTDSDDVMQALIRDIQLARHNIEMVFYIWQPGGMADKVAESLMAAARRGIHCRLMLDSAGSVAFFRSPWAAMMRNAGIEVVEALKVNLMRVFLRRMDLRQHRKMIMIDNYIAYTGSMNMVDPRFFKQDAGVGQWVDVMARMEGPIATAMGVIYSCDWEIETGKRILPPPPDVNIMPFEQASGHTIHTIASGPGFPEDLIHQALLTATYSAREYLIMTTPYFVPSDDLLHAICTAAQRGVDVSIILPRKNDSMLVGWASRAFFTELLAAGVKIYQFEGGLLHTKSVLVDGELSLVGTVNLDMRSLWLNFEITLAIDDKGFGADLAAVQDDYISRSRLLDERLWLKRPLWQRVAERLFYFFSPLL.

A run of 2 helical transmembrane segments spans residues 3–23 and 38–58; these read TFYT…IAGV and MAWL…YLSF. PLD phosphodiesterase domains are found at residues 219 to 246 and 399 to 426; these read MDLR…VDPR and EGGL…DMRS. Catalysis depends on residues histidine 224, lysine 226, aspartate 231, histidine 404, lysine 406, and aspartate 411.

It belongs to the phospholipase D family. Cardiolipin synthase subfamily. ClsA sub-subfamily.

It is found in the cell inner membrane. It catalyses the reaction 2 a 1,2-diacyl-sn-glycero-3-phospho-(1'-sn-glycerol) = a cardiolipin + glycerol. Functionally, catalyzes the reversible phosphatidyl group transfer from one phosphatidylglycerol molecule to another to form cardiolipin (CL) (diphosphatidylglycerol) and glycerol. In Escherichia fergusonii (strain ATCC 35469 / DSM 13698 / CCUG 18766 / IAM 14443 / JCM 21226 / LMG 7866 / NBRC 102419 / NCTC 12128 / CDC 0568-73), this protein is Cardiolipin synthase A.